A 264-amino-acid chain; its full sequence is Thymidylate synthase (264 aa).

Arg-21 contacts dUMP. Position 51 (His-51) interacts with (6R)-5,10-methylene-5,6,7,8-tetrahydrofolate. 126-127 (RR) contacts dUMP. The active-site Nucleophile is the Cys-146. Residues 166 to 169 (RSAD), Asn-177, and 207 to 209 (HIY) contribute to the dUMP site. Asp-169 is a binding site for (6R)-5,10-methylene-5,6,7,8-tetrahydrofolate. Residue Ser-263 coordinates (6R)-5,10-methylene-5,6,7,8-tetrahydrofolate.

This sequence belongs to the thymidylate synthase family. Bacterial-type ThyA subfamily. In terms of assembly, homodimer.

Its subcellular location is the cytoplasm. The enzyme catalyses dUMP + (6R)-5,10-methylene-5,6,7,8-tetrahydrofolate = 7,8-dihydrofolate + dTMP. The protein operates within pyrimidine metabolism; dTTP biosynthesis. Catalyzes the reductive methylation of 2'-deoxyuridine-5'-monophosphate (dUMP) to 2'-deoxythymidine-5'-monophosphate (dTMP) while utilizing 5,10-methylenetetrahydrofolate (mTHF) as the methyl donor and reductant in the reaction, yielding dihydrofolate (DHF) as a by-product. This enzymatic reaction provides an intracellular de novo source of dTMP, an essential precursor for DNA biosynthesis. This chain is Thymidylate synthase, found in Bacillus velezensis (strain DSM 23117 / BGSC 10A6 / LMG 26770 / FZB42) (Bacillus amyloliquefaciens subsp. plantarum).